Consider the following 747-residue polypeptide: WD repeat-containing protein 91 (747 aa).

The stretch at 183-227 (QRTNQVQEENEVLRQKLFALQAEVHRLKKEEQQQEEAAALVQHKL) forms a coiled coil. Serine 256 is subject to Phosphoserine. Residues 265 to 278 (LLPQSKKSPSRLSP) show a composition bias toward low complexity. The tract at residues 265–358 (LLPQSKKSPS…SQTQCAEKKL (94 aa)) is disordered. A compositionally biased stretch (polar residues) spans 283 to 299 (PQAQSSAKKDTFSSQAT). Serine 288 is subject to Phosphoserine. The span at 332–343 (RLQDHGKERREL) shows a compositional bias: basic and acidic residues. A compositionally biased stretch (polar residues) spans 344–353 (LSTSSSQTQC). WD repeat units lie at residues 406–445 (EHHS…QTKA), 448–488 (ISKS…NLCE), 511–555 (VCSA…QQLQ), 560–599 (PEPI…CAMS), 602–641 (AHCG…LKVS), 664–702 (VQVP…KVLE), and 709–747 (GHRA…AHKL).

The protein belongs to the WD repeat WDR91 family. As to quaternary structure, interacts with WDR81; involved in early to late endosome cargo transport. Interacts with BECN1; negatively regulates the PI3 kinase/PI3K activity associated with endosomal membranes.

The protein resides in the early endosome membrane. The protein localises to the late endosome membrane. Its function is as follows. Functions as a negative regulator of the PI3 kinase/PI3K activity associated with endosomal membranes via BECN1, a core subunit of the PI3K complex. By modifying the phosphatidylinositol 3-phosphate/PtdInsP3 content of endosomal membranes may regulate endosome fusion, recycling, sorting and early to late endosome transport. It is for instance, required for the delivery of cargos like BST2/tetherin from early to late endosome and thereby participates indirectly to their degradation by the lysosome. May play a role in meiosis. The sequence is that of WD repeat-containing protein 91 from Rattus norvegicus (Rat).